The following is a 92-amino-acid chain: Putative membrane protein insertion efficiency factor (92 aa).

Belongs to the UPF0161 family.

The protein localises to the cell inner membrane. Its function is as follows. Could be involved in insertion of integral membrane proteins into the membrane. The polypeptide is Putative membrane protein insertion efficiency factor (Synechococcus sp. (strain CC9902)).